The following is a 408-amino-acid chain: Imidazolonepropionase (408 aa).

Fe(3+)-binding residues include His73 and His75. His73 and His75 together coordinate Zn(2+). 4-imidazolone-5-propanoate-binding residues include Arg82, Tyr145, and His178. Tyr145 contributes to the N-formimidoyl-L-glutamate binding site. A Fe(3+)-binding site is contributed by His243. Residue His243 coordinates Zn(2+). Gln246 provides a ligand contact to 4-imidazolone-5-propanoate. Asp318 contacts Fe(3+). Asp318 contributes to the Zn(2+) binding site. N-formimidoyl-L-glutamate is bound by residues Asn320 and Gly322. 4-imidazolone-5-propanoate is bound at residue Ser323.

The protein belongs to the metallo-dependent hydrolases superfamily. HutI family. Requires Zn(2+) as cofactor. The cofactor is Fe(3+).

The protein resides in the cytoplasm. The enzyme catalyses 4-imidazolone-5-propanoate + H2O = N-formimidoyl-L-glutamate. It participates in amino-acid degradation; L-histidine degradation into L-glutamate; N-formimidoyl-L-glutamate from L-histidine: step 3/3. Its function is as follows. Catalyzes the hydrolytic cleavage of the carbon-nitrogen bond in imidazolone-5-propanoate to yield N-formimidoyl-L-glutamate. It is the third step in the universal histidine degradation pathway. The sequence is that of Imidazolonepropionase from Shewanella halifaxensis (strain HAW-EB4).